The primary structure comprises 254 residues: Putative epimerase LsrE (254 aa).

Residues 14–34 (VALLASYPLSVGILAGQWIAL) form a helical membrane-spanning segment. A divalent metal cation contacts are provided by His50, Asp52, and His81. Asp52 serves as the catalytic Proton acceptor. Substrate-binding positions include His81, 166 to 169 (GYGS), 199 to 201 (DGS), and 221 to 222 (GS). Asp199 provides a ligand contact to a divalent metal cation. Asp199 serves as the catalytic Proton donor.

The protein belongs to the ribulose-phosphate 3-epimerase family. A divalent metal cation serves as cofactor.

Its subcellular location is the cell membrane. This chain is Putative epimerase LsrE (lsrE), found in Salmonella typhi.